The following is a 265-amino-acid chain: Glycine/sarcosine N-methyltransferase (265 aa).

S-adenosyl-L-methionine is bound by residues tyrosine 28, tryptophan 36, arginine 45, alanine 69, aspartate 90, 116–117 (DW), and leucine 134. The substrate site is built by asparagine 136, arginine 169, and tyrosine 208.

It belongs to the class I-like SAM-binding methyltransferase superfamily. Glycine N-methyltransferase family. In terms of assembly, monomer.

The enzyme catalyses glycine + 2 S-adenosyl-L-methionine = N,N-dimethylglycine + 2 S-adenosyl-L-homocysteine + 2 H(+). The catalysed reaction is glycine + S-adenosyl-L-methionine = sarcosine + S-adenosyl-L-homocysteine + H(+). It carries out the reaction sarcosine + S-adenosyl-L-methionine = N,N-dimethylglycine + S-adenosyl-L-homocysteine + H(+). The protein operates within amine and polyamine biosynthesis; betaine biosynthesis via glycine pathway; betaine from glycine: step 1/3. It participates in amine and polyamine biosynthesis; betaine biosynthesis via glycine pathway; betaine from glycine: step 2/3. Its activity is regulated as follows. Inhibited by acetate, dimethylglycine and S-adenosyl-L-homocysteine. Functionally, catalyzes the methylation of glycine and sarcosine to sarcosine and dimethylglycine, respectively, with S-adenosylmethionine (AdoMet) acting as the methyl donor. The polypeptide is Glycine/sarcosine N-methyltransferase (Aphanothece halophytica).